Here is a 125-residue protein sequence, read N- to C-terminus: MSLPKDLLYTEEHEWVKAEDGSYIIGITDFAQDQLGDIVFVELPEVGDTVTKGDSIGSIESVKTVSDFYAPVTGKVVAVNETLEDEPELINSNPYDTGWILKLTEVEEADVTALLSSDDYEKGLD.

The region spanning 22-104 (SYIIGITDFA…YDTGWILKLT (83 aa)) is the Lipoyl-binding domain. K63 carries the post-translational modification N6-lipoyllysine.

It belongs to the GcvH family. In terms of assembly, the glycine cleavage system is composed of four proteins: P, T, L and H. (R)-lipoate is required as a cofactor.

Functionally, the glycine cleavage system catalyzes the degradation of glycine. The H protein shuttles the methylamine group of glycine from the P protein to the T protein. Its function is as follows. Is also involved in protein lipoylation via its role as an octanoyl/lipoyl carrier protein intermediate. This chain is Glycine cleavage system H protein, found in Listeria innocua serovar 6a (strain ATCC BAA-680 / CLIP 11262).